The primary structure comprises 505 residues: MPRSYKEECSFLERLSDSAFLIKKGFVPNMKVEGKFYINEHLEKLMFDELRHWCGAQGIGGFLPGVKQIANVAALPGIVGYSVGLPDVHSGYGFAIGNMAAFDMSLPEAVVSPGGVGFDINCGVRLLRTNLEEKDVQPVKERLAQSLFDHIPVGVGSKGVIPMGAKDLEDALEMGVDWSLREGYAWAEDKEHCEEYGRMLQADSAKVSAKAKKRGLPQLGTLGAGNHYAEIQVVDEIYNEFAAKKMGIDHKGQVCVMIHSGSRGLGHQVATDALVAMEKAMKRDKIEVNDRQLACAHIKSPEGQDYLKGMAGAANYAWVNRSSMTFLTRQAFAKVFNSTPDDLDMHLIYDVSHNIAKVEEHFLDGRQRQLLVHRKGSTRAFPPHHPLIPVDYQLTGQPVLIGGTMGTCSYVLTGTEKGMTETFGTTCHGAGRALSRAKSRRNLDYQDVLENLAQKGISIRVASPKLVMEEAPESYKNVTDVVDTCHSAGISKKAIKLRPIAVIKG.

Mn(2+)-binding residues include D119, C122, H227, H259, and H353. Position 226–230 (226–230) interacts with GMP; sequence NHYAE. Residues 353-354, 402-405, S409, 428-431, and K504 each bind GMP; these read HN, GGTM, and HGAG. The active-site GMP-histidine intermediate is the H428.

The protein belongs to the RtcB family. As to quaternary structure, catalytic component of the tRNA-splicing ligase complex. Requires Mn(2+) as cofactor.

The enzyme catalyses a 3'-end 3'-phospho-ribonucleotide-RNA + a 5'-end dephospho-ribonucleoside-RNA + GTP = a ribonucleotidyl-ribonucleotide-RNA + GMP + diphosphate. The catalysed reaction is a 3'-end 2',3'-cyclophospho-ribonucleotide-RNA + a 5'-end dephospho-ribonucleoside-RNA + GTP + H2O = a ribonucleotidyl-ribonucleotide-RNA + GMP + diphosphate + H(+). In terms of biological role, catalytic subunit of the tRNA-splicing ligase complex that acts by directly joining spliced tRNA halves to mature-sized tRNAs by incorporating the precursor-derived splice junction phosphate into the mature tRNA as a canonical 3',5'-phosphodiester. May act as an RNA ligase with broad substrate specificity, and may function toward other RNAs. The sequence is that of RNA-splicing ligase RtcB homolog from Nematostella vectensis (Starlet sea anemone).